Here is a 321-residue protein sequence, read N- to C-terminus: Ribosomal RNA small subunit methyltransferase H (321 aa).

Residues Gly40 to His42, Asp60, Phe84, Asp106, and Gln113 contribute to the S-adenosyl-L-methionine site.

Belongs to the methyltransferase superfamily. RsmH family.

The protein resides in the cytoplasm. The catalysed reaction is cytidine(1402) in 16S rRNA + S-adenosyl-L-methionine = N(4)-methylcytidine(1402) in 16S rRNA + S-adenosyl-L-homocysteine + H(+). In terms of biological role, specifically methylates the N4 position of cytidine in position 1402 (C1402) of 16S rRNA. The sequence is that of Ribosomal RNA small subunit methyltransferase H from Pasteurella multocida (strain Pm70).